The sequence spans 398 residues: MRSSDHMAFAGVLPIVFLLILSSADLAASQSQPGPTNQPYNYGRLSPAMAVIVVILIAALFFMGFFSIYFRHCSGVPDAGVSPAGGARSRATVNAAARGLDVSVVETFPTFLYSDVKTQKLGKGELECAICLNEFEDDETLRLLPKCDHVFHPHCIDAWLEAHVTCPVCRANLAEQVAEGESVEPGGTEPDLELQQVVVNPEPVVTAPVPEQLVTSEVDSRRLPGVPVDLKRVKFSRSHTTGHSVVQPGECTERFTLRLPEDVRKRIMKDWKLNRTNSLLVLPRGGSSRRGKPIDRSRARSDRWLFRKTPSFLWRSRDDGSIRLGATGSVRASAVPNSTGSDSVRAGDRWAFLRNASFLWRNSSVHVPRGGVNKDGEGTSVKSTGASGSTSGSVRLPV.

Positions 1–29 (MRSSDHMAFAGVLPIVFLLILSSADLAAS) are cleaved as a signal peptide. A helical membrane pass occupies residues 50-70 (AVIVVILIAALFFMGFFSIYF). An RING-type; atypical zinc finger spans residues 128–170 (CAICLNEFEDDETLRLLPKCDHVFHPHCIDAWLEAHVTCPVCR). S278 carries the post-translational modification Phosphoserine. The disordered stretch occupies residues 368–398 (PRGGVNKDGEGTSVKSTGASGSTSGSVRLPV). Low complexity predominate over residues 378–398 (GTSVKSTGASGSTSGSVRLPV).

The protein belongs to the RING-type zinc finger family. ATL subfamily.

The protein localises to the membrane. The enzyme catalyses S-ubiquitinyl-[E2 ubiquitin-conjugating enzyme]-L-cysteine + [acceptor protein]-L-lysine = [E2 ubiquitin-conjugating enzyme]-L-cysteine + N(6)-ubiquitinyl-[acceptor protein]-L-lysine.. The protein operates within protein modification; protein ubiquitination. E3 ubiquitin-protein ligase able to catalyze polyubiquitination with ubiquitin-conjugating enzyme E2 UBC8 in vitro. May be involved in the plant C/N response and the early steps of the plant defense signaling pathway. This Arabidopsis thaliana (Mouse-ear cress) protein is E3 ubiquitin-protein ligase ATL6 (ATL6).